Here is a 66-residue protein sequence, read N- to C-terminus: Large ribosomal subunit protein bL35 (66 aa).

Residues 1–16 (MPKMKTHRGAAKRVKR) show a composition bias toward basic residues. The interval 1–28 (MPKMKTHRGAAKRVKRTGSGQLKRSRAF) is disordered.

It belongs to the bacterial ribosomal protein bL35 family.

This Staphylococcus epidermidis (strain ATCC 35984 / DSM 28319 / BCRC 17069 / CCUG 31568 / BM 3577 / RP62A) protein is Large ribosomal subunit protein bL35.